The following is a 225-amino-acid chain: Cytidylate kinase (225 aa).

12 to 20 (GPSGAGKGT) serves as a coordination point for ATP.

Belongs to the cytidylate kinase family. Type 1 subfamily.

The protein resides in the cytoplasm. The enzyme catalyses CMP + ATP = CDP + ADP. The catalysed reaction is dCMP + ATP = dCDP + ADP. In Stenotrophomonas maltophilia (strain R551-3), this protein is Cytidylate kinase.